Consider the following 305-residue polypeptide: tRNA dimethylallyltransferase (305 aa).

Residue 8–15 (GPTAVGKT) participates in ATP binding. 10–15 (TAVGKT) contacts substrate. Residues 33 to 36 (DSRQ) form an interaction with substrate tRNA region.

It belongs to the IPP transferase family. As to quaternary structure, monomer. It depends on Mg(2+) as a cofactor.

It catalyses the reaction adenosine(37) in tRNA + dimethylallyl diphosphate = N(6)-dimethylallyladenosine(37) in tRNA + diphosphate. In terms of biological role, catalyzes the transfer of a dimethylallyl group onto the adenine at position 37 in tRNAs that read codons beginning with uridine, leading to the formation of N6-(dimethylallyl)adenosine (i(6)A). This is tRNA dimethylallyltransferase from Thermotoga petrophila (strain ATCC BAA-488 / DSM 13995 / JCM 10881 / RKU-1).